We begin with the raw amino-acid sequence, 569 residues long: Aspartate--tRNA ligase, cytoplasmic 2 (569 aa).

The segment at 1-23 is disordered; that stretch reads MSEENNHKEKSKNEIKKEKKKIE. The tract at residues 292–295 is aspartate; sequence QFYR. Arginine 314 lines the L-aspartate pocket. ATP-binding positions include 314-316 and 322-324; these read RTD and RHL. Positions 475 and 479 each coordinate L-aspartate. 540–543 is a binding site for ATP; it reads GLER.

Belongs to the class-II aminoacyl-tRNA synthetase family. Type 2 subfamily.

Its subcellular location is the cytoplasm. It carries out the reaction tRNA(Asp) + L-aspartate + ATP = L-aspartyl-tRNA(Asp) + AMP + diphosphate. The polypeptide is Aspartate--tRNA ligase, cytoplasmic 2 (aspS2) (Dictyostelium discoideum (Social amoeba)).